Reading from the N-terminus, the 1901-residue chain is Protein TIC 214 (1901 aa).

6 helical membrane-spanning segments follow: residues 18–38 (IINSVVVVGLYYGFLTTFSIG), 64–84 (FITGQLMMFISIYYAPLHLAL), 87–107 (PHTITVLALPYLLFHFFWNNH), 124–144 (LSIQCVFLNNLIFQLFNHFIL), 172–192 (VGWLIGHILFMKWLGLVLVWI), and 221–241 (IFSILLFITCVYYLGRIPSPI). Disordered regions lie at residues 248–299 (EASK…EERW), 797–817 (REEQTKREEKKEKDKKGENKR), and 1591–1618 (IQEAKEPASQGEKERGSDIENKGNLGPV). The segment covering 256-268 (VESEEERDVEIET) has biased composition (acidic residues). A compositionally biased stretch (basic and acidic residues) spans 1591–1611 (IQEAKEPASQGEKERGSDIEN).

The protein belongs to the TIC214 family. In terms of assembly, part of the Tic complex.

The protein localises to the plastid. The protein resides in the chloroplast inner membrane. Involved in protein precursor import into chloroplasts. May be part of an intermediate translocation complex acting as a protein-conducting channel at the inner envelope. The protein is Protein TIC 214 of Nicotiana sylvestris (Wood tobacco).